We begin with the raw amino-acid sequence, 208 residues long: Probable molybdenum cofactor guanylyltransferase (208 aa).

GTP-binding positions include 12-14 (IAG), K24, D72, and D101. D101 is a Mg(2+) binding site.

This sequence belongs to the MobA family. Mg(2+) serves as cofactor.

It is found in the cytoplasm. The enzyme catalyses Mo-molybdopterin + GTP + H(+) = Mo-molybdopterin guanine dinucleotide + diphosphate. Its function is as follows. Transfers a GMP moiety from GTP to Mo-molybdopterin (Mo-MPT) cofactor (Moco or molybdenum cofactor) to form Mo-molybdopterin guanine dinucleotide (Mo-MGD) cofactor. The sequence is that of Probable molybdenum cofactor guanylyltransferase from Chloroflexus aggregans (strain MD-66 / DSM 9485).